A 607-amino-acid chain; its full sequence is Dihydroxy-acid dehydratase (607 aa).

Position 81 (aspartate 81) interacts with Mg(2+). Residue cysteine 122 coordinates [2Fe-2S] cluster. 2 residues coordinate Mg(2+): aspartate 123 and lysine 124. Lysine 124 is modified (N6-carboxylysine). Cysteine 195 contacts [2Fe-2S] cluster. Residue glutamate 489 coordinates Mg(2+). Serine 515 serves as the catalytic Proton acceptor.

Belongs to the IlvD/Edd family. As to quaternary structure, homodimer. Requires [2Fe-2S] cluster as cofactor. Mg(2+) is required as a cofactor.

It catalyses the reaction (2R)-2,3-dihydroxy-3-methylbutanoate = 3-methyl-2-oxobutanoate + H2O. It carries out the reaction (2R,3R)-2,3-dihydroxy-3-methylpentanoate = (S)-3-methyl-2-oxopentanoate + H2O. It functions in the pathway amino-acid biosynthesis; L-isoleucine biosynthesis; L-isoleucine from 2-oxobutanoate: step 3/4. The protein operates within amino-acid biosynthesis; L-valine biosynthesis; L-valine from pyruvate: step 3/4. Its function is as follows. Functions in the biosynthesis of branched-chain amino acids. Catalyzes the dehydration of (2R,3R)-2,3-dihydroxy-3-methylpentanoate (2,3-dihydroxy-3-methylvalerate) into 2-oxo-3-methylpentanoate (2-oxo-3-methylvalerate) and of (2R)-2,3-dihydroxy-3-methylbutanoate (2,3-dihydroxyisovalerate) into 2-oxo-3-methylbutanoate (2-oxoisovalerate), the penultimate precursor to L-isoleucine and L-valine, respectively. The protein is Dihydroxy-acid dehydratase of Deinococcus radiodurans (strain ATCC 13939 / DSM 20539 / JCM 16871 / CCUG 27074 / LMG 4051 / NBRC 15346 / NCIMB 9279 / VKM B-1422 / R1).